The primary structure comprises 35 residues: Photosystem II reaction center protein T (35 aa).

Residues 3–23 (SVAYILIFTLCIGTIFFAIAF) form a helical membrane-spanning segment.

This sequence belongs to the PsbT family. In terms of assembly, PSII is composed of 1 copy each of membrane proteins PsbA, PsbB, PsbC, PsbD, PsbE, PsbF, PsbH, PsbI, PsbJ, PsbK, PsbL, PsbM, PsbT, PsbX, PsbY, PsbZ, Psb30/Ycf12, peripheral proteins PsbO, CyanoQ (PsbQ), PsbU, PsbV and a large number of cofactors. It forms dimeric complexes.

The protein localises to the cellular thylakoid membrane. Found at the monomer-monomer interface of the photosystem II (PS II) dimer, plays a role in assembly and dimerization of PSII. PSII is a light-driven water plastoquinone oxidoreductase, using light energy to abstract electrons from H(2)O, generating a proton gradient subsequently used for ATP formation. This Nostoc punctiforme (strain ATCC 29133 / PCC 73102) protein is Photosystem II reaction center protein T.